The chain runs to 338 residues: Nicotinate-nucleotide--dimethylbenzimidazole phosphoribosyltransferase (338 aa).

Glu-305 acts as the Proton acceptor in catalysis.

Belongs to the CobT family.

The enzyme catalyses 5,6-dimethylbenzimidazole + nicotinate beta-D-ribonucleotide = alpha-ribazole 5'-phosphate + nicotinate + H(+). It functions in the pathway nucleoside biosynthesis; alpha-ribazole biosynthesis; alpha-ribazole from 5,6-dimethylbenzimidazole: step 1/2. Its function is as follows. Catalyzes the synthesis of alpha-ribazole-5'-phosphate from nicotinate mononucleotide (NAMN) and 5,6-dimethylbenzimidazole (DMB). In Novosphingobium aromaticivorans (strain ATCC 700278 / DSM 12444 / CCUG 56034 / CIP 105152 / NBRC 16084 / F199), this protein is Nicotinate-nucleotide--dimethylbenzimidazole phosphoribosyltransferase.